Here is a 448-residue protein sequence, read N- to C-terminus: Probable D-serine dehydratase (448 aa).

N6-(pyridoxal phosphate)lysine is present on Lys-119.

The protein belongs to the serine/threonine dehydratase family. DsdA subfamily. The cofactor is pyridoxal 5'-phosphate.

It carries out the reaction D-serine = pyruvate + NH4(+). This Pseudomonas aeruginosa (strain UCBPP-PA14) protein is Probable D-serine dehydratase.